A 257-amino-acid chain; its full sequence is Zinc transporter ZupT (257 aa).

8 helical membrane passes run 5–25 (LILTILAGAATFIGAFLGVLG), 32–52 (LLAFSLGFAAGIMLLISLMEM), 61–81 (GMSPVLGYGMFIFGLLGYFGL), 109–129 (AILLTLGISLHNFPEGIATFV), 137–157 (LGFGIALAVALHNIPEGLAVA), 171–191 (ILWAGISGLAEILGGVLAWLI), 195–215 (MISPVVMAAIMAAVAGIMVAL), and 236–256 (GVLCGMSVMGFSLVLLQTAGI). Fe(2+) contacts are provided by Asn120 and Glu123. Positions 123 and 148 each coordinate Zn(2+). Fe(2+) is bound by residues Asn149, Glu152, and Glu181. Glu152 is a Zn(2+) binding site.

Belongs to the ZIP transporter (TC 2.A.5) family. ZupT subfamily.

It is found in the cell inner membrane. It catalyses the reaction Zn(2+)(in) = Zn(2+)(out). Mediates zinc uptake. May also transport other divalent cations. This chain is Zinc transporter ZupT, found in Shigella flexneri serotype 5b (strain 8401).